The sequence spans 147 residues: 3-dehydroquinate dehydratase (147 aa).

Residue Tyr-25 is the Proton acceptor of the active site. Residues Asn-76, His-82, and Asp-89 each contribute to the substrate site. The active-site Proton donor is the His-102. Substrate-binding positions include 103–104 and Arg-113; that span reads LS.

This sequence belongs to the type-II 3-dehydroquinase family. As to quaternary structure, homododecamer.

The enzyme catalyses 3-dehydroquinate = 3-dehydroshikimate + H2O. It functions in the pathway metabolic intermediate biosynthesis; chorismate biosynthesis; chorismate from D-erythrose 4-phosphate and phosphoenolpyruvate: step 3/7. Catalyzes a trans-dehydration via an enolate intermediate. This is 3-dehydroquinate dehydratase from Nostoc sp. (strain PCC 7120 / SAG 25.82 / UTEX 2576).